The sequence spans 607 residues: Phosphoenolpyruvate carboxykinase [GTP] (607 aa).

Substrate is bound by residues Arg81 and 221–223; that span reads YGG. Positions 230 and 250 each coordinate Mn(2+). Ser272 contacts substrate. 273-278 serves as a coordination point for GTP; sequence ACGKTN. Cys274 is a catalytic residue. Asp297 provides a ligand contact to Mn(2+). Position 388 to 390 (388 to 390) interacts with substrate; it reads NSR. GTP contacts are provided by residues Arg390, Arg421, and 516-519; that span reads FGDN.

The protein belongs to the phosphoenolpyruvate carboxykinase [GTP] family. In terms of assembly, monomer. The cofactor is Mn(2+).

Its subcellular location is the cytoplasm. It catalyses the reaction oxaloacetate + GTP = phosphoenolpyruvate + GDP + CO2. The protein operates within carbohydrate biosynthesis; gluconeogenesis. Its function is as follows. Catalyzes the conversion of oxaloacetate (OAA) to phosphoenolpyruvate (PEP), the rate-limiting step in the metabolic pathway that produces glucose from lactate and other precursors derived from the citric acid cycle. The polypeptide is Phosphoenolpyruvate carboxykinase [GTP] (Renibacterium salmoninarum (strain ATCC 33209 / DSM 20767 / JCM 11484 / NBRC 15589 / NCIMB 2235)).